Here is a 126-residue protein sequence, read N- to C-terminus: Large ribosomal subunit protein bL12 (126 aa).

It belongs to the bacterial ribosomal protein bL12 family. In terms of assembly, homodimer. Part of the ribosomal stalk of the 50S ribosomal subunit. Forms a multimeric L10(L12)X complex, where L10 forms an elongated spine to which 2 to 4 L12 dimers bind in a sequential fashion. Binds GTP-bound translation factors.

Its function is as follows. Forms part of the ribosomal stalk which helps the ribosome interact with GTP-bound translation factors. Is thus essential for accurate translation. The polypeptide is Large ribosomal subunit protein bL12 (Rhizorhabdus wittichii (strain DSM 6014 / CCUG 31198 / JCM 15750 / NBRC 105917 / EY 4224 / RW1) (Sphingomonas wittichii)).